We begin with the raw amino-acid sequence, 467 residues long: Glutamate--tRNA ligase (467 aa).

The short motif at 9-19 (PSPTGYLHIGG) is the 'HIGH' region element. The 'KMSKS' region motif lies at 237–241 (KLSKR). Lys240 is a binding site for ATP.

It belongs to the class-I aminoacyl-tRNA synthetase family. Glutamate--tRNA ligase type 1 subfamily. Monomer.

Its subcellular location is the cytoplasm. It catalyses the reaction tRNA(Glu) + L-glutamate + ATP = L-glutamyl-tRNA(Glu) + AMP + diphosphate. In terms of biological role, catalyzes the attachment of glutamate to tRNA(Glu) in a two-step reaction: glutamate is first activated by ATP to form Glu-AMP and then transferred to the acceptor end of tRNA(Glu). In Xanthomonas axonopodis pv. citri (strain 306), this protein is Glutamate--tRNA ligase.